The following is a 160-amino-acid chain: MLRQLKLTLNISRWIFMPWQRHASASSSQVPPFLAPISDDVIVDYEDPDYLPLPEYPVRPNEPLETRKQRLLYQSRKRGMLENDLLLSTFAAKYLKDFSAEQTAIYDQLINGVSNDWDIYYWATEVKPTPEEYNTEIMKLLKEHVKNAERVTRFRQPDLT.

A mitochondrion-targeting transit peptide spans 1–23 (MLRQLKLTLNISRWIFMPWQRHA).

The protein belongs to the SDHAF2 family. Interacts with the flavoprotein subunit within the SDH catalytic dimer.

The protein resides in the mitochondrion matrix. Its function is as follows. Plays an essential role in the assembly of succinate dehydrogenase (SDH), an enzyme complex (also referred to as respiratory complex II) that is a component of both the tricarboxylic acid (TCA) cycle and the mitochondrial electron transport chain, and which couples the oxidation of succinate to fumarate with the reduction of ubiquinone (coenzyme Q) to ubiquinol. Required for flavinylation (covalent attachment of FAD) of the flavoprotein subunit of the SDH catalytic dimer. The polypeptide is Succinate dehydrogenase assembly factor 2-B, mitochondrial (Drosophila pseudoobscura pseudoobscura (Fruit fly)).